A 470-amino-acid chain; its full sequence is ESX-4 secretion system ATPase EccB4 (470 aa).

The chain crosses the membrane as a helical span at residues 44–64 (LALGCVLAIVAAMGCAFVALL).

It belongs to the EccB family. In terms of assembly, part of the ESX-4 / type VII secretion system (T7SS), which is composed of cytosolic and membrane components.

It localises to the cell membrane. Functionally, an ATPase. The protein is ESX-4 secretion system ATPase EccB4 (eccB4) of Mycobacterium tuberculosis (strain CDC 1551 / Oshkosh).